The chain runs to 297 residues: Ribosomal protein L11 methyltransferase (297 aa).

Residues threonine 139, glycine 164, aspartate 186, and asparagine 233 each coordinate S-adenosyl-L-methionine.

The protein belongs to the methyltransferase superfamily. PrmA family.

The protein resides in the cytoplasm. The enzyme catalyses L-lysyl-[protein] + 3 S-adenosyl-L-methionine = N(6),N(6),N(6)-trimethyl-L-lysyl-[protein] + 3 S-adenosyl-L-homocysteine + 3 H(+). Its function is as follows. Methylates ribosomal protein L11. In Trichodesmium erythraeum (strain IMS101), this protein is Ribosomal protein L11 methyltransferase.